Here is a 481-residue protein sequence, read N- to C-terminus: Aspartyl/glutamyl-tRNA(Asn/Gln) amidotransferase subunit B (481 aa).

The protein belongs to the GatB/GatE family. GatB subfamily. As to quaternary structure, heterotrimer of A, B and C subunits.

It carries out the reaction L-glutamyl-tRNA(Gln) + L-glutamine + ATP + H2O = L-glutaminyl-tRNA(Gln) + L-glutamate + ADP + phosphate + H(+). The enzyme catalyses L-aspartyl-tRNA(Asn) + L-glutamine + ATP + H2O = L-asparaginyl-tRNA(Asn) + L-glutamate + ADP + phosphate + 2 H(+). In terms of biological role, allows the formation of correctly charged Asn-tRNA(Asn) or Gln-tRNA(Gln) through the transamidation of misacylated Asp-tRNA(Asn) or Glu-tRNA(Gln) in organisms which lack either or both of asparaginyl-tRNA or glutaminyl-tRNA synthetases. The reaction takes place in the presence of glutamine and ATP through an activated phospho-Asp-tRNA(Asn) or phospho-Glu-tRNA(Gln). This is Aspartyl/glutamyl-tRNA(Asn/Gln) amidotransferase subunit B from Pseudomonas putida (strain ATCC 47054 / DSM 6125 / CFBP 8728 / NCIMB 11950 / KT2440).